A 225-amino-acid polypeptide reads, in one-letter code: Protein-L-isoaspartate O-methyltransferase (225 aa).

The active site involves S75.

It belongs to the methyltransferase superfamily. L-isoaspartyl/D-aspartyl protein methyltransferase family.

The protein localises to the cytoplasm. It catalyses the reaction [protein]-L-isoaspartate + S-adenosyl-L-methionine = [protein]-L-isoaspartate alpha-methyl ester + S-adenosyl-L-homocysteine. In terms of biological role, catalyzes the methyl esterification of L-isoaspartyl residues in peptides and proteins that result from spontaneous decomposition of normal L-aspartyl and L-asparaginyl residues. It plays a role in the repair and/or degradation of damaged proteins. This is Protein-L-isoaspartate O-methyltransferase from Xanthomonas campestris pv. campestris (strain 8004).